Consider the following 258-residue polypeptide: Neurotrophin-3 (258 aa).

The signal sequence occupies residues 1–18; the sequence is MSILFYVIFLAYLRGIQG. Residues 19–139 constitute a propeptide that is removed on maturation; it reads NSMDQRSLPE…ANRTSPRRKR (121 aa). The tract at residues 60 to 85 is disordered; it reads QSTLPKAEAPREPEQGEATRSEFQPM. Residues 67–79 are compositionally biased toward basic and acidic residues; it reads EAPREPEQGEATR. A glycan (N-linked (GlcNAc...) asparagine) is linked at asparagine 131. 3 disulfides stabilise this stretch: cysteine 153–cysteine 218, cysteine 196–cysteine 247, and cysteine 206–cysteine 249.

This sequence belongs to the NGF-beta family. Brain and peripheral tissues.

Its subcellular location is the secreted. Functionally, seems to promote the survival of visceral and proprioceptive sensory neurons. The chain is Neurotrophin-3 (Ntf3) from Mus musculus (Mouse).